A 753-amino-acid polypeptide reads, in one-letter code: Probable phosphoenolpyruvate synthase (753 aa).

Residue His398 is the Tele-phosphohistidine intermediate of the active site. Residues Arg488, Arg535, Glu631, Gly653, Thr654, Asn655, and Asp656 each contribute to the substrate site. Residue Glu631 participates in Mg(2+) binding. Asp656 lines the Mg(2+) pocket. The active-site Proton donor is Cys703.

Belongs to the PEP-utilizing enzyme family. Requires Mg(2+) as cofactor.

It catalyses the reaction pyruvate + ATP + H2O = phosphoenolpyruvate + AMP + phosphate + 2 H(+). It participates in carbohydrate biosynthesis; gluconeogenesis. Functionally, catalyzes the phosphorylation of pyruvate to phosphoenolpyruvate. The chain is Probable phosphoenolpyruvate synthase (ppsA) from Archaeoglobus fulgidus (strain ATCC 49558 / DSM 4304 / JCM 9628 / NBRC 100126 / VC-16).